The primary structure comprises 484 residues: ATP synthase subunit beta (484 aa).

Position 162 to 169 (162 to 169) interacts with ATP; that stretch reads GGAGVGKT.

The protein belongs to the ATPase alpha/beta chains family. In terms of assembly, F-type ATPases have 2 components, CF(1) - the catalytic core - and CF(0) - the membrane proton channel. CF(1) has five subunits: alpha(3), beta(3), gamma(1), delta(1), epsilon(1). CF(0) has four main subunits: a(1), b(1), b'(1) and c(9-12).

It localises to the cellular thylakoid membrane. The catalysed reaction is ATP + H2O + 4 H(+)(in) = ADP + phosphate + 5 H(+)(out). Its function is as follows. Produces ATP from ADP in the presence of a proton gradient across the membrane. The catalytic sites are hosted primarily by the beta subunits. This Synechococcus elongatus (strain ATCC 33912 / PCC 7942 / FACHB-805) (Anacystis nidulans R2) protein is ATP synthase subunit beta.